The chain runs to 219 residues: MAVIQDIIAALWQHDFAALADPHIVSVVYFVMFATLFLENGLLPASFLPGDSLLILAGALIAQGVMDFLPTIAILTAAASLGCWLSYIQGRWLGNTKTVKGWLAQLPAKYHQRATCMFDRHGLLALLAGRFLAFVRTLLPTMAGISGLPNRRFQFFNWLSGLLWVSVVTSFGYALSMIPFVKRHEDQVMTFLMILPIALLTAGLLGTLFVVIKKKYCNA.

Residues 1–17 (MAVIQDIIAALWQHDFA) lie on the Cytoplasmic side of the membrane. Residues 18 to 38 (ALADPHIVSVVYFVMFATLFL) traverse the membrane as a helical segment. Topologically, residues 39–67 (ENGLLPASFLPGDSLLILAGALIAQGVMD) are periplasmic. The chain crosses the membrane as a helical span at residues 68–88 (FLPTIAILTAAASLGCWLSYI). Topologically, residues 89 to 160 (QGRWLGNTKT…RRFQFFNWLS (72 aa)) are cytoplasmic. The chain crosses the membrane as a helical span at residues 161-181 (GLLWVSVVTSFGYALSMIPFV). Topologically, residues 182–191 (KRHEDQVMTF) are periplasmic. Residues 192–212 (LMILPIALLTAGLLGTLFVVI) form a helical membrane-spanning segment. At 213–219 (KKKYCNA) the chain is on the cytoplasmic side.

It belongs to the DedA family.

The protein resides in the cell inner membrane. The sequence is that of Inner membrane protein YghB (yghB) from Escherichia coli O6:H1 (strain CFT073 / ATCC 700928 / UPEC).